The sequence spans 215 residues: UPF0502 protein YceH (215 aa).

Lys80 is subject to N6-acetyllysine.

This sequence belongs to the UPF0502 family.

The polypeptide is UPF0502 protein YceH (Escherichia coli O7:K1 (strain IAI39 / ExPEC)).